The following is a 566-amino-acid chain: Tissue-type plasminogen activator (566 aa).

An N-terminal signal peptide occupies residues methionine 1–threonine 21. A propeptide spanning residues serine 22–arginine 33 is cleaved from the precursor. The propeptide at glycine 34–arginine 36 is removed by plasmin. Residues valine 40–valine 82 enclose the Fibronectin type-I domain. Intrachain disulfides connect cysteine 42–cysteine 72, cysteine 70–cysteine 79, cysteine 87–cysteine 98, cysteine 92–cysteine 109, cysteine 111–cysteine 120, cysteine 128–cysteine 209, cysteine 149–cysteine 191, cysteine 180–cysteine 204, cysteine 219–cysteine 300, cysteine 240–cysteine 282, cysteine 271–cysteine 295, cysteine 303–cysteine 434, cysteine 346–cysteine 362, cysteine 354–cysteine 423, cysteine 448–cysteine 523, cysteine 480–cysteine 496, and cysteine 513–cysteine 541. An important for binding to annexin A2 region spans residues arginine 43–glutamine 53. Residues proline 83–glutamate 121 enclose the EGF-like domain. 2 consecutive Kringle domains span residues cysteine 128–cysteine 209 and cysteine 219–cysteine 300. Asparagine 153 is a glycosylation site (N-linked (GlcNAc...) asparagine). Residues isoleucine 315 to arginine 565 form the Peptidase S1 domain. Residues histidine 361 and aspartate 410 each act as charge relay system in the active site. N-linked (GlcNAc...) asparagine glycosylation is present at asparagine 487. The active-site Charge relay system is serine 517.

The protein belongs to the peptidase S1 family. In terms of assembly, heterodimer of chain A and chain B held by a disulfide bond. Binds to fibrin with high affinity. This interaction leads to an increase in the catalytic efficiency of the enzyme due to an increase in affinity for plasminogen. Similarly, binding to heparin increases the activation of plasminogen. Binds to annexin A2, cytokeratin-8, fibronectin and laminin. Binds to mannose receptor and the low-density lipoprotein receptor-related protein (LRP1); these proteins are involved in TPA clearance. Binds LRP1B; binding is followed by internalization and degradation. Forms heterodimer with SERPINA5. Interacts with SERPINE1. In complex with SERPINE1, interacts with SORL1. Post-translationally, the single chain, almost fully active enzyme, can be further processed into a two-chain fully active form by a cleavage after Arg-314 catalyzed by plasmin, tissue kallikrein or factor Xa.

It is found in the secreted. Its subcellular location is the extracellular space. It catalyses the reaction Specific cleavage of Arg-|-Val bond in plasminogen to form plasmin.. Inhibited by SERPINA5. Inhibited by SERPINE1. Converts the abundant, but inactive, zymogen plasminogen to plasmin by hydrolyzing a single Arg-Val bond in plasminogen. By controlling plasmin-mediated proteolysis, it plays an important role in tissue remodeling and degradation, in cell migration and many other physiopathological events. During oocyte activation, plays a role in cortical granule reaction in the zona reaction, which contributes to the block to polyspermy. This Bos taurus (Bovine) protein is Tissue-type plasminogen activator (PLAT).